A 2286-amino-acid polypeptide reads, in one-letter code: Unconventional myosin-IXAb (2286 aa).

In terms of domain architecture, Ras-associating spans 16–114 (SEFTLRVYPG…YRFLLREKNL (99 aa)). The Myosin motor domain maps to 148-971 (AQFVADLCSL…LRQRLQDELH (824 aa)). The helical transmembrane segment at 178 to 198 (IYTYVGSILIAVNPFKFLPIY) threads the bilayer. 242–249 (GESGSGKT) is an ATP binding site. The actin-binding stretch occupies residues 853–875 (LNKLMETLGQSEPYFVKCIRSNA). IQ domains follow at residues 976-996 (RRIV…HFCR), 1025-1054 (QQGA…AVLI), 1066-1095 (RNTA…AAVT), and 1089-1118 (QRRA…QQCR). The segment at 976 to 1113 (RRIVCLQRSF…QSRQRCRILR (138 aa)) is neck or regulatory domain. The tail stretch occupies residues 1114 to 2254 (EQQCREQSKH…PRANRSCPPK (1141 aa)). Disordered stretches follow at residues 1118 to 1279 (REQS…QIRE), 1308 to 1341 (DVPL…FSVS), 1455 to 1588 (CEED…EPML), and 1732 to 1754 (DGTI…SDTV). Positions 1123 to 1133 (HPSTVTKSLHQ) are enriched in polar residues. Residues 1134–1149 (NTEEAEKLEEVWEKQT) are compositionally biased toward basic and acidic residues. The segment covering 1263 to 1273 (PINSAPQTPNR) has biased composition (polar residues). Positions 1455–1465 (CEEDEDDEYED) are enriched in acidic residues. The span at 1485-1501 (CVFHSDSEMSSQKEQKR) shows a compositional bias: basic and acidic residues. The span at 1529–1542 (RGKMRFWSKSKHGD) shows a compositional bias: basic residues. Basic and acidic residues-rich tracts occupy residues 1550–1562 (RSAD…RRND) and 1572–1585 (GVSE…ENRE). The segment at 1759–1808 (GHIFKSTQYSIPTYCEFCSSLIWMMDKACVCKLCRYACHKKCCLRMTTKC) adopts a Phorbol-ester/DAG-type zinc-finger fold. Residues 1823–2011 (VELSRLTSDE…LIICEQMRKY (189 aa)) form the Rho-GAP domain. Residues 2032–2049 (LTHIRRSMGKSRARKSGH) show a composition bias toward basic residues. Disordered stretches follow at residues 2032-2087 (LTHI…QQEE) and 2113-2286 (PRAS…EFMV). Residues 2080–2107 (QAAMQQEEKVLTQQIENLQKEKEELTYE) adopt a coiled-coil conformation. 2 stretches are compositionally biased toward low complexity: residues 2176–2192 (SLDS…SVSS) and 2200–2211 (SSSSGPLFSSSS). Residues 2226–2238 (EQASLSARCASSS) are compositionally biased toward polar residues. Basic and acidic residues predominate over residues 2254–2270 (KPREPGDTGGRRREHEF).

The protein belongs to the TRAFAC class myosin-kinesin ATPase superfamily. Myosin family.

The protein resides in the membrane. The protein localises to the cytoplasm. It is found in the synapse. Its subcellular location is the cell projection. It localises to the growth cone. Myosins are actin-based motor molecules with ATPase activity. Unconventional myosins serve in intracellular movements. Regulates Rho by stimulating it's GTPase activity in neurons. Required for the regulation of neurite branching and motor neuron axon guidance. The sequence is that of Unconventional myosin-IXAb (myo9ab) from Danio rerio (Zebrafish).